The sequence spans 488 residues: Bifunctional protein GlmU (488 aa).

Residues 1-237 (MPRTRTPLAA…AEEASGVNDR (237 aa)) are pyrophosphorylase. Residues 13 to 16 (LAAG), lysine 27, glutamine 82, 87 to 88 (GT), 110 to 112 (SGD), glycine 149, glutamate 164, asparagine 179, and asparagine 235 each bind UDP-N-acetyl-alpha-D-glucosamine. Aspartate 112 is a binding site for Mg(2+). Residue asparagine 235 coordinates Mg(2+). Positions 238–258 (IELARANRVMVGRLAEAFMRA) are linker. An N-acetyltransferase region spans residues 259-488 (GVTIEDPARF…KGRPAARRAS (230 aa)). Positions 341 and 359 each coordinate UDP-N-acetyl-alpha-D-glucosamine. Histidine 371 serves as the catalytic Proton acceptor. The UDP-N-acetyl-alpha-D-glucosamine site is built by tyrosine 374 and asparagine 385. Residues alanine 388, 394–395 (NY), serine 413, alanine 431, and arginine 448 contribute to the acetyl-CoA site. A disordered region spans residues 459 to 488 (AQRQAEKQMKGTATGPAPARKGRPAARRAS). Residues 478 to 488 (RKGRPAARRAS) show a composition bias toward basic residues.

In the N-terminal section; belongs to the N-acetylglucosamine-1-phosphate uridyltransferase family. It in the C-terminal section; belongs to the transferase hexapeptide repeat family. In terms of assembly, homotrimer. It depends on Mg(2+) as a cofactor.

The protein resides in the cytoplasm. It carries out the reaction alpha-D-glucosamine 1-phosphate + acetyl-CoA = N-acetyl-alpha-D-glucosamine 1-phosphate + CoA + H(+). It catalyses the reaction N-acetyl-alpha-D-glucosamine 1-phosphate + UTP + H(+) = UDP-N-acetyl-alpha-D-glucosamine + diphosphate. Its pathway is nucleotide-sugar biosynthesis; UDP-N-acetyl-alpha-D-glucosamine biosynthesis; N-acetyl-alpha-D-glucosamine 1-phosphate from alpha-D-glucosamine 6-phosphate (route II): step 2/2. It participates in nucleotide-sugar biosynthesis; UDP-N-acetyl-alpha-D-glucosamine biosynthesis; UDP-N-acetyl-alpha-D-glucosamine from N-acetyl-alpha-D-glucosamine 1-phosphate: step 1/1. It functions in the pathway bacterial outer membrane biogenesis; LPS lipid A biosynthesis. Functionally, catalyzes the last two sequential reactions in the de novo biosynthetic pathway for UDP-N-acetylglucosamine (UDP-GlcNAc). The C-terminal domain catalyzes the transfer of acetyl group from acetyl coenzyme A to glucosamine-1-phosphate (GlcN-1-P) to produce N-acetylglucosamine-1-phosphate (GlcNAc-1-P), which is converted into UDP-GlcNAc by the transfer of uridine 5-monophosphate (from uridine 5-triphosphate), a reaction catalyzed by the N-terminal domain. The polypeptide is Bifunctional protein GlmU (Anaeromyxobacter dehalogenans (strain 2CP-C)).